We begin with the raw amino-acid sequence, 1221 residues long: DNA-directed RNA polymerase subunit beta' (1221 aa).

Zn(2+) contacts are provided by Cys60, Cys62, Cys75, and Cys78. Mg(2+) is bound by residues Asp449, Asp451, and Asp453. Positions 820, 894, 901, and 904 each coordinate Zn(2+).

It belongs to the RNA polymerase beta' chain family. In terms of assembly, the RNAP catalytic core consists of 2 alpha, 1 beta, 1 beta' and 1 omega subunit. When a sigma factor is associated with the core the holoenzyme is formed, which can initiate transcription. Mg(2+) serves as cofactor. Requires Zn(2+) as cofactor.

It catalyses the reaction RNA(n) + a ribonucleoside 5'-triphosphate = RNA(n+1) + diphosphate. In terms of biological role, DNA-dependent RNA polymerase catalyzes the transcription of DNA into RNA using the four ribonucleoside triphosphates as substrates. The sequence is that of DNA-directed RNA polymerase subunit beta' from Ligilactobacillus salivarius (strain UCC118) (Lactobacillus salivarius).